Reading from the N-terminus, the 351-residue chain is uncharacterized protein (351 aa).

Positions 1-27 are cleaved as a signal peptide; that stretch reads MKNKKRVLIASSLSCAILLLSAATTQA. A disordered region spans residues 28 to 71; sequence NSAHKDSQDQNKKEHVDKSQQKDKRNVTNKDKNSTVPDDIGKNG. Residues 30 to 60 are compositionally biased toward basic and acidic residues; that stretch reads AHKDSQDQNKKEHVDKSQQKDKRNVTNKDKN.

This sequence belongs to the aerolysin family.

This is an uncharacterized protein from Staphylococcus aureus (strain N315).